The sequence spans 396 residues: Cellular tumor antigen p53 (396 aa).

Residues 1 to 44 (MADLAENVSLPLSQESFEDLWKMNLNLVAVQPPETESWVGYDNF) are transcription activation (acidic). Residues 63 to 89 (ATEPAPQPSISTLDTGSPPTSTVPTTS) form a disordered region. The span at 77 to 89 (TGSPPTSTVPTTS) shows a compositional bias: low complexity. Residues 90–281 (DYPGALGFQL…KTEEINLKKQ (192 aa)) mediate DNA binding. Positions 164, 167, 227, and 231 each coordinate Zn(2+). Residues 262-269 (RVCACPGR) form an interaction with DNA region. Positions 297–317 (KRAMKEASLPAPQPGASKKTK) match the Bipartite nuclear localization signal motif. The disordered stretch occupies residues 301–322 (KEASLPAPQPGASKKTKSSPAV). The segment at 325-356 (DEIYTLQIRGKEKYEMLKKFNDSLELSELVPV) is oligomerization. The Nuclear export signal signature appears at 339-350 (EMLKKFNDSLEL). The tract at residues 369–392 (KRVAKRDFGVGPKKRKKLLVKEEK) is basic (repression of DNA-binding).

The protein belongs to the p53 family. In terms of assembly, binds DNA as a homotetramer. Zn(2+) is required as a cofactor.

It localises to the cytoplasm. It is found in the nucleus. Multifunctional transcription factor that induces cell cycle arrest, DNA repair or apoptosis upon binding to its target DNA sequence. Acts as a tumor suppressor in many tumor types; induces growth arrest or apoptosis depending on the physiological circumstances and cell type. Negatively regulates cell division by controlling expression of a set of genes required for this process. One of the activated genes is an inhibitor of cyclin-dependent kinases. Apoptosis induction seems to be mediated either by stimulation of BAX and FAS antigen expression, or by repression of Bcl-2 expression. The chain is Cellular tumor antigen p53 (tp53) from Oncorhynchus mykiss (Rainbow trout).